The primary structure comprises 225 residues: 7-cyano-7-deazaguanine synthase (225 aa).

Residue 9–19 (LSGGLDSATCL) participates in ATP binding. Zn(2+) is bound by residues Cys189, Cys199, Cys202, and Cys205.

Belongs to the QueC family. Requires Zn(2+) as cofactor.

The enzyme catalyses 7-carboxy-7-deazaguanine + NH4(+) + ATP = 7-cyano-7-deazaguanine + ADP + phosphate + H2O + H(+). It participates in purine metabolism; 7-cyano-7-deazaguanine biosynthesis. Its function is as follows. Catalyzes the ATP-dependent conversion of 7-carboxy-7-deazaguanine (CDG) to 7-cyano-7-deazaguanine (preQ(0)). The sequence is that of 7-cyano-7-deazaguanine synthase from Dechloromonas aromatica (strain RCB).